A 144-amino-acid chain; its full sequence is Large ribosomal subunit protein uL11 (144 aa).

Belongs to the universal ribosomal protein uL11 family. In terms of assembly, part of the ribosomal stalk of the 50S ribosomal subunit. Interacts with L10 and the large rRNA to form the base of the stalk. L10 forms an elongated spine to which L12 dimers bind in a sequential fashion forming a multimeric L10(L12)X complex. In terms of processing, one or more lysine residues are methylated.

In terms of biological role, forms part of the ribosomal stalk which helps the ribosome interact with GTP-bound translation factors. The polypeptide is Large ribosomal subunit protein uL11 (Streptomyces sp. (strain FRI-5)).